Consider the following 2066-residue polypeptide: Kinesin-like protein KIN-12C (2066 aa).

Disordered regions lie at residues 1–41 (MSRN…SQIQ) and 59–116 (RAQH…RVSL). A compositionally biased stretch (low complexity) spans 20 to 33 (SLSLFSPSRPPLNS). Residues 67-76 (GPEKKFEVLE) are compositionally biased toward basic and acidic residues. The span at 99–109 (EPNSAQSTPTR) shows a compositional bias: polar residues. The Kinesin motor domain maps to 168 to 505 (NVQVLIRLRP…LKFAQRAKLI (338 aa)). 249-256 (GQTGSGKT) is an ATP binding site. Microtubules-binding stretches follow at residues 375-379 (SSRSH), 406-412 (VDLAGSE), and 454-458 (HVPYR). Coiled-coil stretches lie at residues 1521–1618 (DLKT…VDEI) and 1650–1772 (KIYA…EILL). Disordered regions lie at residues 1803 to 1823 (SAAE…RGSS) and 2043 to 2066 (KYRK…TRYR). The stretch at 1905–2051 (VQRVVEKAQQ…AKYRKTSNNH (147 aa)) forms a coiled coil. Polar residues predominate over residues 2047 to 2066 (TSNNHPSTRTQGQSSGTRYR).

Belongs to the TRAFAC class myosin-kinesin ATPase superfamily. Kinesin family. KIN-12 subfamily. Interacts with TAN. Interacts with RANGAP1. As to expression, expressed in tissues enriched in dividing cells, such as root meristems, root primordia, and leaf primordia/young leaves.

The protein resides in the cytoplasm. It localises to the cytoskeleton. Its subcellular location is the phragmoplast. Its function is as follows. Involved in the spatial control of cytokinesis by a proper phragmoplast guidance. Localizes TAN to the cortical division sites (CDS) during cytokinesis via direct binding. This chain is Kinesin-like protein KIN-12C, found in Arabidopsis thaliana (Mouse-ear cress).